The chain runs to 671 residues: Probable potassium transport system protein Kup 2 (671 aa).

Transmembrane regions (helical) follow at residues 18-38, 60-80, 103-123, 149-169, 173-193, 218-238, 252-272, 292-312, 343-363, 373-393, 402-422, and 424-444; these read GFLI…LYAM, VSLV…LIAL, WLIV…ALTP, VTTL…ASLV, FGPI…INSF, AGFF…ALYS, WPFV…WLLA, MVIY…QALI, LYIP…VLYF, YSLA…YFLI, IAFI…ASLV, and FING…VMFI.

This sequence belongs to the HAK/KUP transporter (TC 2.A.72) family.

The protein resides in the cell membrane. It carries out the reaction K(+)(in) + H(+)(in) = K(+)(out) + H(+)(out). In terms of biological role, transport of potassium into the cell. Likely operates as a K(+):H(+) symporter. This is Probable potassium transport system protein Kup 2 from Lactococcus lactis subsp. cremoris (strain SK11).